The following is a 374-amino-acid chain: Actin-related protein 2/3 complex subunit 2B (374 aa).

It belongs to the ARPC2 family. In terms of assembly, component of the Arp2/3 complex composed of ARP2, ARP3, ARPC1/p41-ARC, ARPC2/p34-ARC, ARPC3/p21-ARC, ARPC4/p20-ARC and ARPC5/p16-ARC. In terms of tissue distribution, expressed at low levels in all tissues with a relatively highest expression in inflorescences.

The protein localises to the cytoplasm. It is found in the cytoskeleton. It localises to the cell projection. Functions as actin-binding component of the Arp2/3 complex which is involved in regulation of actin polymerization and together with an activating nucleation-promoting factor (NPF) mediates the formation of branched actin networks. Seems to contact the mother actin filament. Arp2/3 complex plays a critical role in the control of cell morphogenesis via the modulation of cell polarity development. This Arabidopsis thaliana (Mouse-ear cress) protein is Actin-related protein 2/3 complex subunit 2B (ARPC2B).